We begin with the raw amino-acid sequence, 102 residues long: Small ribosomal subunit protein uS10 (102 aa).

The protein belongs to the universal ribosomal protein uS10 family. In terms of assembly, part of the 30S ribosomal subunit.

Its function is as follows. Involved in the binding of tRNA to the ribosomes. This chain is Small ribosomal subunit protein uS10, found in Brevibacillus brevis (strain 47 / JCM 6285 / NBRC 100599).